The chain runs to 286 residues: Acetylglutamate kinase (286 aa).

Substrate-binding positions include Gly63–Gly64, Arg85, and Asn178.

The protein belongs to the acetylglutamate kinase family. ArgB subfamily.

It localises to the cytoplasm. It carries out the reaction N-acetyl-L-glutamate + ATP = N-acetyl-L-glutamyl 5-phosphate + ADP. It participates in amino-acid biosynthesis; L-arginine biosynthesis; N(2)-acetyl-L-ornithine from L-glutamate: step 2/4. Its function is as follows. Catalyzes the ATP-dependent phosphorylation of N-acetyl-L-glutamate. The sequence is that of Acetylglutamate kinase from Clostridioides difficile (strain 630) (Peptoclostridium difficile).